The sequence spans 316 residues: Glutathione synthetase (316 aa).

One can recognise an ATP-grasp domain in the interval 125-310 (KLFTAWFSDL…ITGMLMDAIE (186 aa)). 151 to 207 (WEKHSDIILKPLDGMGGASIFRVKEGDPNLGVIAETLTEHGTRYCMAQNYLPAIKDG) contacts ATP. Glutamate 281 and asparagine 283 together coordinate Mg(2+).

This sequence belongs to the prokaryotic GSH synthase family. In terms of assembly, homotetramer. The cofactor is Mg(2+). It depends on Mn(2+) as a cofactor.

It carries out the reaction gamma-L-glutamyl-L-cysteine + glycine + ATP = glutathione + ADP + phosphate + H(+). Its pathway is sulfur metabolism; glutathione biosynthesis; glutathione from L-cysteine and L-glutamate: step 2/2. With respect to regulation, inhibited by 7,8-dihydrofolate, methotrexate and trimethoprim. The polypeptide is Glutathione synthetase (gshB) (Escherichia coli (strain K12)).